A 115-amino-acid polypeptide reads, in one-letter code: Large ribosomal subunit protein bL19 (115 aa).

Belongs to the bacterial ribosomal protein bL19 family.

This protein is located at the 30S-50S ribosomal subunit interface and may play a role in the structure and function of the aminoacyl-tRNA binding site. In Streptococcus equi subsp. equi (strain 4047), this protein is Large ribosomal subunit protein bL19.